The following is a 1078-amino-acid chain: Isoleucine--tRNA ligase (1078 aa).

Positions 52–62 (PTANGKPALHH) match the 'HIGH' region motif. The 'KMSKS' region motif lies at 637-641 (KMSKS). Lys640 contacts ATP.

This sequence belongs to the class-I aminoacyl-tRNA synthetase family. IleS type 2 subfamily. Monomer. Requires Zn(2+) as cofactor.

It localises to the cytoplasm. It carries out the reaction tRNA(Ile) + L-isoleucine + ATP = L-isoleucyl-tRNA(Ile) + AMP + diphosphate. In terms of biological role, catalyzes the attachment of isoleucine to tRNA(Ile). As IleRS can inadvertently accommodate and process structurally similar amino acids such as valine, to avoid such errors it has two additional distinct tRNA(Ile)-dependent editing activities. One activity is designated as 'pretransfer' editing and involves the hydrolysis of activated Val-AMP. The other activity is designated 'posttransfer' editing and involves deacylation of mischarged Val-tRNA(Ile). In Deinococcus radiodurans (strain ATCC 13939 / DSM 20539 / JCM 16871 / CCUG 27074 / LMG 4051 / NBRC 15346 / NCIMB 9279 / VKM B-1422 / R1), this protein is Isoleucine--tRNA ligase.